Here is a 161-residue protein sequence, read N- to C-terminus: Protein shisa-like-2B (161 aa).

The helical transmembrane segment at 65–85 threads the bilayer; the sequence is IGALIGLGIAALVLLAFVISV. A disordered region spans residues 115–134; the sequence is QEGNSNRKSKAPRSNAASNS.

The protein belongs to the shisa family.

Its subcellular location is the membrane. This chain is Protein shisa-like-2B (SHISAL2B), found in Bos taurus (Bovine).